A 211-amino-acid polypeptide reads, in one-letter code: Large ribosomal subunit protein uL4 (211 aa).

The disordered stretch occupies residues 44-94; that stretch reads RSGNHATKTRSEVRGGGKKPWSQKGTGHARQGSTRAPHWVGGGTVHGPQKR.

Belongs to the universal ribosomal protein uL4 family. In terms of assembly, part of the 50S ribosomal subunit.

Functionally, one of the primary rRNA binding proteins, this protein initially binds near the 5'-end of the 23S rRNA. It is important during the early stages of 50S assembly. It makes multiple contacts with different domains of the 23S rRNA in the assembled 50S subunit and ribosome. Its function is as follows. Forms part of the polypeptide exit tunnel. This Leptospira borgpetersenii serovar Hardjo-bovis (strain JB197) protein is Large ribosomal subunit protein uL4.